The sequence spans 270 residues: Type III pantothenate kinase (270 aa).

Position 16-23 (16-23) interacts with ATP; that stretch reads EIGNTTAM. Residues Y106 and 113–116 contribute to the substrate site; that span reads GADR. Catalysis depends on D115, which acts as the Proton acceptor. Position 136 (D136) interacts with K(+). T139 is a binding site for ATP. T191 serves as a coordination point for substrate.

This sequence belongs to the type III pantothenate kinase family. As to quaternary structure, homodimer. NH4(+) is required as a cofactor. Requires K(+) as cofactor.

It is found in the cytoplasm. It carries out the reaction (R)-pantothenate + ATP = (R)-4'-phosphopantothenate + ADP + H(+). It participates in cofactor biosynthesis; coenzyme A biosynthesis; CoA from (R)-pantothenate: step 1/5. In terms of biological role, catalyzes the phosphorylation of pantothenate (Pan), the first step in CoA biosynthesis. The protein is Type III pantothenate kinase of Chlorobium luteolum (strain DSM 273 / BCRC 81028 / 2530) (Pelodictyon luteolum).